Consider the following 122-residue polypeptide: Large ribosomal subunit protein uL14 (122 aa).

The protein belongs to the universal ribosomal protein uL14 family. In terms of assembly, part of the 50S ribosomal subunit. Forms a cluster with proteins L3 and L19. In the 70S ribosome, L14 and L19 interact and together make contacts with the 16S rRNA in bridges B5 and B8.

Binds to 23S rRNA. Forms part of two intersubunit bridges in the 70S ribosome. This Streptococcus equi subsp. equi (strain 4047) protein is Large ribosomal subunit protein uL14.